Reading from the N-terminus, the 246-residue chain is 4-hydroxy-tetrahydrodipicolinate reductase (246 aa).

NAD(+) is bound by residues 8–13 (GAKGRM), 74–76 (GTT), and 101–104 (APNF). The active-site Proton donor/acceptor is H131. H132 contacts (S)-2,3,4,5-tetrahydrodipicolinate. K135 (proton donor) is an active-site residue. 141–142 (GT) contacts (S)-2,3,4,5-tetrahydrodipicolinate.

The protein belongs to the DapB family.

Its subcellular location is the cytoplasm. The catalysed reaction is (S)-2,3,4,5-tetrahydrodipicolinate + NAD(+) + H2O = (2S,4S)-4-hydroxy-2,3,4,5-tetrahydrodipicolinate + NADH + H(+). It carries out the reaction (S)-2,3,4,5-tetrahydrodipicolinate + NADP(+) + H2O = (2S,4S)-4-hydroxy-2,3,4,5-tetrahydrodipicolinate + NADPH + H(+). It functions in the pathway amino-acid biosynthesis; L-lysine biosynthesis via DAP pathway; (S)-tetrahydrodipicolinate from L-aspartate: step 4/4. In terms of biological role, catalyzes the conversion of 4-hydroxy-tetrahydrodipicolinate (HTPA) to tetrahydrodipicolinate. This chain is 4-hydroxy-tetrahydrodipicolinate reductase, found in Cutibacterium acnes (strain DSM 16379 / KPA171202) (Propionibacterium acnes).